Reading from the N-terminus, the 192-residue chain is MKLLEDRIKKDGQVIGTDVLKVDNFLNHQVDPDLMADLGHEFYRRFSNEPITKILTVESSGIAPAIATAMEFHKPLVFARKHKSLTLKDHLYTATVYSFTKKTSNEIAISRKFLSADDNVLIIDDFLANGQAVEGLMDIIAQAGATLSGVGIVIEKTFQKGRKLLDEKHVRVESLARINAFENGQVIFAPED.

Xanthine is bound by residues Leu20 and Asn27. 128–132 (ANGQA) contacts 5-phospho-alpha-D-ribose 1-diphosphate. Lys156 is a binding site for xanthine.

Belongs to the purine/pyrimidine phosphoribosyltransferase family. Xpt subfamily. As to quaternary structure, homodimer.

The protein resides in the cytoplasm. It carries out the reaction XMP + diphosphate = xanthine + 5-phospho-alpha-D-ribose 1-diphosphate. It functions in the pathway purine metabolism; XMP biosynthesis via salvage pathway; XMP from xanthine: step 1/1. Functionally, converts the preformed base xanthine, a product of nucleic acid breakdown, to xanthosine 5'-monophosphate (XMP), so it can be reused for RNA or DNA synthesis. This is Xanthine phosphoribosyltransferase from Lacticaseibacillus casei (strain BL23) (Lactobacillus casei).